Here is a 410-residue protein sequence, read N- to C-terminus: Argininosuccinate synthase (410 aa).

ATP-binding positions include A11 to S19 and A37. The L-citrulline site is built by Y88 and S93. Residue S116–N124 participates in ATP binding. Positions 120, 124, and 125 each coordinate L-aspartate. N124 serves as a coordination point for L-citrulline. L-citrulline contacts are provided by R128, S181, S190, E269, and Y281.

The protein belongs to the argininosuccinate synthase family. Type 1 subfamily. In terms of assembly, homotetramer.

Its subcellular location is the cytoplasm. It carries out the reaction L-citrulline + L-aspartate + ATP = 2-(N(omega)-L-arginino)succinate + AMP + diphosphate + H(+). Its pathway is amino-acid biosynthesis; L-arginine biosynthesis; L-arginine from L-ornithine and carbamoyl phosphate: step 2/3. This Schizosaccharomyces pombe (strain 972 / ATCC 24843) (Fission yeast) protein is Argininosuccinate synthase (arg12).